The primary structure comprises 195 residues: Protein GrpE (195 aa).

The protein belongs to the GrpE family. Homodimer.

Its subcellular location is the cytoplasm. Participates actively in the response to hyperosmotic and heat shock by preventing the aggregation of stress-denatured proteins, in association with DnaK and GrpE. It is the nucleotide exchange factor for DnaK and may function as a thermosensor. Unfolded proteins bind initially to DnaJ; upon interaction with the DnaJ-bound protein, DnaK hydrolyzes its bound ATP, resulting in the formation of a stable complex. GrpE releases ADP from DnaK; ATP binding to DnaK triggers the release of the substrate protein, thus completing the reaction cycle. Several rounds of ATP-dependent interactions between DnaJ, DnaK and GrpE are required for fully efficient folding. The chain is Protein GrpE from Francisella tularensis subsp. tularensis (strain FSC 198).